The primary structure comprises 459 residues: MAEEGPPEPSIDFVPALCFVPRGVAKDRPDKIVLTQAELARIIGDTQQELDEESDDDAEEGENAEEDQNDMDVDDHADANSENRDPQDEFQFQEYDNEANANVTSLANIVDAGEQIPDEDEDSEAEDEVIKPSDNLILVGHVQDDAASMEVWVFNQEEEALYTHHDFLLPSFPLCIEWMNHDAGSEKAGNMCAIGCMDPIITVWDLDIQDAIEPTFKLGSKGSRKQNKEQYGHKDAVLDLSWNTNFEHILASGSVDQTVILWDMDEGQPHTTITAFGKQIQSLEFHPQEAQSILTGCADGYVRLFDCRDAEGVNSSSIEWKVDGEVEKVLWHPTQTDYFIVGTNDGTLHYADKRSPGQLLWSVKAHNEEISGVCFNNQKPNLLTSTSTEGTLKVWNFDGTEAKHVYEHEFNMGRLQCMRQCPEDPYTLAFGGEKPPRCAIFNIKNSIAVRRTFGIPDAE.

A disordered region spans residues glycine 44–arginine 84. The segment covering glutamine 48–valine 73 has biased composition (acidic residues). The span at aspartate 74–arginine 84 shows a compositional bias: basic and acidic residues. 5 WD repeats span residues leucine 168 to proline 214, glycine 232 to threonine 272, alanine 275 to serine 315, lysine 321 to tryptophan 361, and alanine 365 to valine 405. Serine 385 is subject to Phosphoserine.

Belongs to the WD repeat PWP1 family. As to quaternary structure, interacts with Mybbp1A. Phosphorylated in response to nutrient-activated TORC1 signaling. In terms of tissue distribution, detected in the germline of adult testis and ovary (at protein level). Detected in ovary somatic cells, in zfh1-positive cyst cells in the testis and absent in differentiated cyst cells (at protein level).

Its subcellular location is the nucleus. It is found in the nucleolus. It localises to the chromosome. The protein resides in the nucleoplasm. Functionally, chromatin-associated factor that regulates transcription. Regulates Pol I-mediated rRNA biogenesis and, probably, Pol III-mediated transcription. Regulates the localization to the nucleolus of Cdk7, a regulator of the Pol I-elongation factor TFIIH. Acts as a regulator of cell proliferation and tissue growth as part of the TORC1 and Myc signaling pathway in response to nutrients. Required in males for both germline stem cell (GSC) maintenance and early stages of germ cell differentiation of germ cell cysts. Not required for female germline stem cell (GSC) maintenance, but necessary to regulate germ cell differentiation and egg chamber development. In female somatic cells, required for follicle stem cell survival and maintenance. The chain is Periodic tryptophan protein 1 homolog from Drosophila melanogaster (Fruit fly).